The chain runs to 264 residues: Transcription factor bHLH52 (264 aa).

In terms of domain architecture, bHLH spans 134–183; that stretch reads RELSAQSIAARKRRRRITEKTQELGKLIPGSQKHNTAEMFNAAAKYVKFL.

In terms of assembly, homodimer. Expressed constitutively in roots, leaves, stems, and flowers.

The protein localises to the nucleus. The protein is Transcription factor bHLH52 (BHLH52) of Arabidopsis thaliana (Mouse-ear cress).